Here is a 456-residue protein sequence, read N- to C-terminus: Probable serine incorporator (456 aa).

Helical transmembrane passes span 10-32 (AASC…CCNF), 44-64 (IVYS…LAPG), 95-115 (VCFG…GVTS), 126-146 (GFWG…FFIP), 153-173 (VWMY…LVLL), 195-215 (VWAV…VAGI), 234-254 (KFFI…AIHP), 265-285 (LLQA…ALSF), 301-321 (LAGM…MVVY), 383-403 (VAYS…YIMM), and 430-450 (IASS…PALF).

The protein belongs to the TDE1 family.

Its subcellular location is the endoplasmic reticulum membrane. Its function is as follows. Enhances the incorporation of serine into phosphatidylserine and sphingolipids. This is Probable serine incorporator (serinc) from Nematostella vectensis (Starlet sea anemone).